Consider the following 487-residue polypeptide: MTTHYIAGNWQAGQGETLQSLNPVTQAVIWQGQGADASQVDTAVQAARQAFPAWAQLSLEARIDVLEKFAAQLKVHAEAMAQCIGEETGKPLWESATEVTSMINKVAISVQSYRERTGEKSGPLADATAVLRHKPHGVVAVFGPYNFPGHLPNGHIVPALLAGNCVVFKPSELTPKVAELTVNCWIAAGLPAGVLNLVQGARETGVALAANPGIDGLFFTGSSRTGNLLHQQFAGRPDKILALEMGGNNPLVVDEVKDLDAAVYTIVQSAFISAGQRCTCARRLLVPQGAWGDALIARLVEVCKTITVGAFDEQPAPFMGSVISLQAARALLAAQVELAAKGGVKLLEMTQPQADAALLTPGIVDVTAVADRPDEEFFGPLLQVIRYGDFDAAIDEANNTQYGLAAGLLSDSRARYQYFWLRSRAGIVNWNKQLTGAASSAPFGGVGASGNHRASAYYAADYCAYPVASLETASLALPATLTPGVTL.

221–226 is a binding site for NAD(+); that stretch reads GSSRTG. Residues Glu-244 and Cys-278 contribute to the active site.

Belongs to the aldehyde dehydrogenase family. AstD subfamily.

It catalyses the reaction N-succinyl-L-glutamate 5-semialdehyde + NAD(+) + H2O = N-succinyl-L-glutamate + NADH + 2 H(+). Its pathway is amino-acid degradation; L-arginine degradation via AST pathway; L-glutamate and succinate from L-arginine: step 4/5. Catalyzes the NAD-dependent reduction of succinylglutamate semialdehyde into succinylglutamate. This chain is N-succinylglutamate 5-semialdehyde dehydrogenase, found in Pseudomonas putida (strain ATCC 700007 / DSM 6899 / JCM 31910 / BCRC 17059 / LMG 24140 / F1).